The following is a 166-amino-acid chain: Coiled-coil domain-containing protein 12 (166 aa).

At Met1 the chain carries N-acetylmethionine. Residues 1 to 56 (MEATTAGVGRLEEEALRRKERLKALREKTGRKDKEDGEPKTKHLREEEEEGEKHRE) are disordered. Positions 8-28 (VGRLEEEALRRKERLKALREK) form a coiled coil. The span at 10–56 (RLEEEALRRKERLKALREKTGRKDKEDGEPKTKHLREEEEEGEKHRE) shows a compositional bias: basic and acidic residues. Lys53 is modified (N6-acetyllysine). Lys94 participates in a covalent cross-link: Glycyl lysine isopeptide (Lys-Gly) (interchain with G-Cter in SUMO2). Positions 117-144 (KRDVAKKLEKLKKRTQRAIAELIRERLK) form a coiled coil. The segment at 147–166 (EDSLASAVDAATEQKTCDSD) is disordered. Phosphoserine is present on residues Ser149 and Ser165.

This chain is Coiled-coil domain-containing protein 12 (CCDC12), found in Homo sapiens (Human).